The primary structure comprises 195 residues: MARVPPPALKKDKKEKKPPKDNSKNVMRNLHIRKLCLNICVGESGDRLTRAAKVLEQLTGQQPVFSKARYTVRSFGIRRNEKIAVHCTVRGAKAEEILERGLKVREYELRRDNFSATGNFGFGIQEHIDLGIKYDPSIGIYGLDFYVVLGPTRIQCTTQKTQDWQGWIPPIVLTKEDAMKWFQQKYDGIILNSKK.

A disordered region spans residues 1-25; sequence MARVPPPALKKDKKEKKPPKDNSKN.

It belongs to the universal ribosomal protein uL5 family. As to quaternary structure, component of the large ribosomal subunit.

It is found in the nucleus. The protein resides in the cytoplasm. Its function is as follows. Component of the ribosome, a large ribonucleoprotein complex responsible for the synthesis of proteins in the cell. The small ribosomal subunit (SSU) binds messenger RNAs (mRNAs) and translates the encoded message by selecting cognate aminoacyl-transfer RNA (tRNA) molecules. The large subunit (LSU) contains the ribosomal catalytic site termed the peptidyl transferase center (PTC), which catalyzes the formation of peptide bonds, thereby polymerizing the amino acids delivered by tRNAs into a polypeptide chain. The nascent polypeptides leave the ribosome through a tunnel in the LSU and interact with protein factors that function in enzymatic processing, targeting, and the membrane insertion of nascent chains at the exit of the ribosomal tunnel. This Spodoptera frugiperda (Fall armyworm) protein is Large ribosomal subunit protein uL5 (RpL11).